The chain runs to 296 residues: Circadian clock oscillator protein KaiA (296 aa).

Positions Ala-2–Ser-133 are psR domain, binds oxidized quinones. Residues Ala-2–Leu-152 enclose the KaiA N-terminal domain. Residues Gly-153–Arg-161 form a flexible linker region. Residues Asp-162–Pro-270 form the KaiA C-terminal domain.

As to quaternary structure, homodimer. The KaiABC complex composition changes during the circadian cycle to control KaiC phosphorylation. Complexes KaiC(6), KaiA(2-4):KaiC(6), KaiB(6):KaiC(6) and KaiC(6):KaiB(6):KaiA(12) are among the most important forms, many form cooperatively. KaiA and CikA bind to the same region of the KaiB(fs) form and therefore compete.

Key component of the KaiABC oscillator complex, which constitutes the main circadian regulator in cyanobacteria. Complex composition changes during the circadian cycle to control KaiC phosphorylation. KaiA stimulates KaiC autophosphorylation, while KaiB sequesters KaiA, leading to KaiC autodephosphorylation. KaiA binding to the KaiC CII domain during the subjective day yields KaiA(2-4):KaiC(6) complexes which stimulate KaiC autophosphorylation. Phospho-Ser-431 KaiC accumulation triggers binding of KaiB during the subjective night to form the KaiB(6):KaiC(6) complex, leading to changes in the output regulators CikA and SasA. KaiB(6):KaiC(6) formation exposes a site for KaiA binding on KaiB that sequesters KaiA from KaiC's CII domain, making the KaiC(6):KaiB(6):KaiA(12) complex resulting in KaiC autodephosphorylation. Complete dephosphorylation of KaiC leads to dissociation of KaiA(2):KaiB(1), completing 1 cycle of the Kai oscillator. Its function is as follows. Binds oxidized quinones via the N-terminal PsR domain, allowing it to sense redox changes and possibly mediate clock input. In Parasynechococcus marenigrum (strain WH8102), this protein is Circadian clock oscillator protein KaiA.